Here is a 599-residue protein sequence, read N- to C-terminus: Aspartate--tRNA(Asp/Asn) ligase (599 aa).

An L-aspartate-binding site is contributed by Glu173. The segment at 197-200 is aspartate; it reads QLYK. Arg219 is a binding site for L-aspartate. Residues 219–221 and Gln228 contribute to the ATP site; that span reads RDE. His451 contacts L-aspartate. Glu484 is an ATP binding site. Arg491 lines the L-aspartate pocket. 536–539 is a binding site for ATP; the sequence is GLDR.

The protein belongs to the class-II aminoacyl-tRNA synthetase family. Type 1 subfamily. As to quaternary structure, homodimer.

The protein resides in the cytoplasm. It carries out the reaction tRNA(Asx) + L-aspartate + ATP = L-aspartyl-tRNA(Asx) + AMP + diphosphate. In terms of biological role, aspartyl-tRNA synthetase with relaxed tRNA specificity since it is able to aspartylate not only its cognate tRNA(Asp) but also tRNA(Asn). Reaction proceeds in two steps: L-aspartate is first activated by ATP to form Asp-AMP and then transferred to the acceptor end of tRNA(Asp/Asn). This is Aspartate--tRNA(Asp/Asn) ligase from Methylococcus capsulatus (strain ATCC 33009 / NCIMB 11132 / Bath).